The sequence spans 269 residues: Iron(3+)-hydroxamate import ATP-binding protein FhuC (269 aa).

Positions 4-240 (LSTEQLGIGY…DILKQVFQID (237 aa)) constitute an ABC transporter domain. Residues 36–43 (GPNGCGKS) and 160–171 (LLLLDEPTTYLD) contribute to the ATP site.

It belongs to the ABC transporter superfamily. Iron (Fe3+)-hydroxamate importer (TC 3.A.1.14.7) family. The complex is composed of an ATP-binding protein (FhuC), two transmembrane proteins (FhuB and FhuG) and a solute-binding protein (FhuD or YxeB).

It localises to the cell membrane. The enzyme catalyses ATP + H2O + Fe(3+)-hydroxamate complex-[hydroxamate-binding protein]Side 1 = ADP + phosphate + Fe(3+)-hydroxamate complexSide 2 + [hydroxamate-binding protein]Side 1.. Part of the ABC transporter complex FhuBGCD involved in iron(3+)-hydroxamate import. Responsible for energy coupling to the transport system. The chain is Iron(3+)-hydroxamate import ATP-binding protein FhuC (fhuC) from Bacillus subtilis (strain 168).